The chain runs to 103 residues: Small ribosomal subunit protein uS10 (103 aa).

It belongs to the universal ribosomal protein uS10 family. In terms of assembly, part of the 30S ribosomal subunit.

Its function is as follows. Involved in the binding of tRNA to the ribosomes. In Acinetobacter baumannii (strain AB307-0294), this protein is Small ribosomal subunit protein uS10.